A 322-amino-acid chain; its full sequence is uncharacterized protein (322 aa).

4 consecutive transmembrane segments (helical) span residues 24 to 44, 68 to 88, 100 to 120, and 125 to 145; these read LLHLQNFASAGIITILCIQIT, LFFELIGYHPFVIGALLLIFI, IVTSSVIILHLYMSGGITPTF, and VQLITVGIGVALLMNLYMPSL.

The protein localises to the cell membrane. This is an uncharacterized protein from Bacillus subtilis (strain 168).